We begin with the raw amino-acid sequence, 295 residues long: MNNSSKLCRKTSFPRSNIFCNLVDKIVKRPSLQFLGQWGYHCYEPRIYRTLAKILRYVDLDGFDILLTDYIAFVEKSGHRFELNFNLEFTEICVNTILYWVFARKGNPDFVELLLKKTKDYVQDRSCSLALIWRTFTPVYCPSPLSGITPLLYVAQTRQSNILKILLQYGILEREKNPINIVLTILLYPSRVRIMVDHELIDIQEDAKTCLMLCSRVLSTISVREIETQLSLGRRPIIQNWLDYIPPTRYKDPCELVHLCRITIRTQLLANNMLPNGIFSLLIPTRLQNFLNLES.

The stretch at Ser146–Lys176 is one ANK repeat. In terms of domain architecture, SOCS box spans Asp243–Ser295.

This sequence belongs to the ankyrin SOCS box (ASB) family. In terms of tissue distribution, specifically expressed in testis. Localizes to spermatogenic cells in testis, with highest expression in round spermatids and condensing spermatids and lower expression in pachytene spermatocytes.

Its pathway is protein modification; protein ubiquitination. Its function is as follows. May be a substrate-recognition component of a SCF-like ECS (Elongin-Cullin-SOCS-box protein) E3 ubiquitin-protein ligase complex which mediates the ubiquitination and subsequent proteasomal degradation of target proteins. The protein is Ankyrin repeat and SOCS box protein 17 (Asb17) of Mus musculus (Mouse).